A 133-amino-acid polypeptide reads, in one-letter code: Nickel-responsive regulator (133 aa).

The Ni(2+) site is built by His-76, His-87, His-89, and Cys-95.

It belongs to the transcriptional regulatory CopG/NikR family. In terms of assembly, homotetramer. The cofactor is Ni(2+).

Its function is as follows. Transcriptional repressor of the nikABCDE operon. Is active in the presence of excessive concentrations of intracellular nickel. The chain is Nickel-responsive regulator from Salmonella choleraesuis (strain SC-B67).